The primary structure comprises 339 residues: Transcription initiation factor IIB (339 aa).

The TFIIB-type zinc-finger motif lies at 39 to 70 (EELICPVCGSKSIIKDYERAEIVCEMCGCVLQ). Zn(2+) is bound by residues C43, C46, C62, and C65. Repeat copies occupy residues 156–239 (SELD…SREL) and 250–331 (DYVP…ELTE).

This sequence belongs to the TFIIB family.

Functionally, stabilizes TBP binding to an archaeal box-A promoter. Also responsible for recruiting RNA polymerase II to the pre-initiation complex (DNA-TBP-TFIIB). This Methanococcus maripaludis (strain DSM 14266 / JCM 13030 / NBRC 101832 / S2 / LL) protein is Transcription initiation factor IIB.